Consider the following 281-residue polypeptide: Glyceraldehyde dehydrogenase medium chain (281 aa).

The region spanning 1 to 176 is the FAD-binding PCMH-type domain; sequence MYPPEFSYVR…TQIEVPVLDG (176 aa). FAD is bound by residues 31 to 35 and 110 to 114; these read AGGQS and TIGGA.

Heterotrimer composed of a large chain (CutA), a medium chain (CutB) and a small chain (CutC). FAD is required as a cofactor.

The protein localises to the cytoplasm. It catalyses the reaction D-glyceraldehyde + A + H2O = (R)-glycerate + AH2 + H(+). Component of the glyceraldehyde dehydrogenase which is involved the nonphosphorylated Entner-Doudoroff pathway. Catalyzes the oxidation of D-glyceraldehyde to yield glycerate. When the artificial electron acceptor 2,6-dichlorophenol-indophenol (Cl2Ind) is used, the enzyme shows a broad substrate range (glyceraldehyde-3-phosphate, formaldehyde, acetaldehyde, propionaldehyde and isobutyraldehyde), but is most active with D-glyceraldehyde. It is not known which acceptor is utilized in vivo. The sequence is that of Glyceraldehyde dehydrogenase medium chain (cutB) from Sulfolobus acidocaldarius (strain ATCC 33909 / DSM 639 / JCM 8929 / NBRC 15157 / NCIMB 11770).